The sequence spans 88 residues: Small ribosomal subunit protein bS20 (88 aa).

It belongs to the bacterial ribosomal protein bS20 family.

Binds directly to 16S ribosomal RNA. In Oenococcus oeni (strain ATCC BAA-331 / PSU-1), this protein is Small ribosomal subunit protein bS20.